Consider the following 671-residue polypeptide: DNA ligase (671 aa).

Residues 32-36 (DAEYD), 81-82 (SL), and E113 each bind NAD(+). K115 functions as the N6-AMP-lysine intermediate in the catalytic mechanism. The NAD(+) site is built by R136, E173, K290, and K314. Zn(2+)-binding residues include C408, C411, C426, and C432. One can recognise a BRCT domain in the interval 593 to 671 (EIDSPFAGKT…ETEMLRLLGS (79 aa)).

It belongs to the NAD-dependent DNA ligase family. LigA subfamily. Mg(2+) is required as a cofactor. The cofactor is Mn(2+).

The enzyme catalyses NAD(+) + (deoxyribonucleotide)n-3'-hydroxyl + 5'-phospho-(deoxyribonucleotide)m = (deoxyribonucleotide)n+m + AMP + beta-nicotinamide D-nucleotide.. DNA ligase that catalyzes the formation of phosphodiester linkages between 5'-phosphoryl and 3'-hydroxyl groups in double-stranded DNA using NAD as a coenzyme and as the energy source for the reaction. It is essential for DNA replication and repair of damaged DNA. The protein is DNA ligase of Escherichia coli O81 (strain ED1a).